Consider the following 405-residue polypeptide: Double C2-like domain-containing protein alpha (405 aa).

Residues 1–94 (MRGRRGDRMT…DSYDSDDTTA (94 aa)) are interaction with UNC13D and DYNLT1. The interval 34–54 (DYFPRRGPGPEGGGGGGGTGC) is disordered. Residues 42–54 (GPEGGGGGGGTGC) show a composition bias toward gly residues. C2 domains follow at residues 94 to 216 (ALGT…HFNI) and 256 to 389 (ERGR…ERWH). 9 residues coordinate Ca(2+): Asp-125, Asp-131, Asp-186, Asp-188, Asp-287, Asp-293, Asp-347, Asp-349, and Asp-355. Residues 220–405 (RQVPLPSPSS…PPAAGAYPLA (186 aa)) are interaction with UNC13D.

Interacts (via N-terminus) with UNC13A. Interacts with cytoplasmic dynein light chain DYNLT1. Interacts with UNC13D. Requires Ca(2+) as cofactor. As to expression, brain and mast cells.

It is found in the cytoplasmic vesicle. Its subcellular location is the secretory vesicle. The protein resides in the synaptic vesicle membrane. It localises to the synapse. The protein localises to the synaptosome. It is found in the lysosome. Its function is as follows. Calcium sensor which most probably regulates fusion of vesicles with membranes. Binds calcium and phospholipids. May be involved in calcium dependent neurotransmitter release through the interaction with UNC13A. May be involved in calcium-dependent spontaneous release of neurotransmitter in absence of action potentials in neuronal cells. Regulates Ca(2+)-dependent secretory lysosome exocytosis in mast cells. In Mus musculus (Mouse), this protein is Double C2-like domain-containing protein alpha (Doc2a).